The sequence spans 310 residues: UDP-N-acetylenolpyruvoylglucosamine reductase (310 aa).

Positions 35 to 199 (VGGPAQALFT…TSARFRGTPA (165 aa)) constitute an FAD-binding PCMH-type domain. Arg179 is an active-site residue. Ser228 functions as the Proton donor in the catalytic mechanism. Glu298 is a catalytic residue.

This sequence belongs to the MurB family. The cofactor is FAD.

Its subcellular location is the cytoplasm. It carries out the reaction UDP-N-acetyl-alpha-D-muramate + NADP(+) = UDP-N-acetyl-3-O-(1-carboxyvinyl)-alpha-D-glucosamine + NADPH + H(+). It participates in cell wall biogenesis; peptidoglycan biosynthesis. In terms of biological role, cell wall formation. This chain is UDP-N-acetylenolpyruvoylglucosamine reductase, found in Rhodopseudomonas palustris (strain BisB5).